The primary structure comprises 306 residues: Putative beta-lactamase HcpD (306 aa).

Positions 1-25 (MIKSWTKKWFLILFLMASCSSYLVA) are cleaved as a signal peptide. TPR repeat units lie at residues 28–61 (GEKY…RVGV), 96–133 (HLAC…KGGV), 168–205 (GISC…KDGA), and 240–277 (GSGC…GFSG). 7 disulfides stabilise this stretch: Cys55-Cys63, Cys91-Cys99, Cys127-Cys135, Cys163-Cys171, Cys199-Cys207, Cys235-Cys243, and Cys271-Cys279.

The protein belongs to the hcp beta-lactamase family.

Its subcellular location is the secreted. It catalyses the reaction a beta-lactam + H2O = a substituted beta-amino acid. Its function is as follows. May hydrolyze 6-aminopenicillinic acid and 7-aminocephalosporanic acid (ACA) derivatives. Binds to penicillin. This is Putative beta-lactamase HcpD (hcpD) from Helicobacter pylori (strain ATCC 700392 / 26695) (Campylobacter pylori).